A 635-amino-acid chain; its full sequence is MRQSDRGAELTNEDRALPTPPDPENGLSGILRLLLQELSLFYSRDVNGLCLLYDLLHSPWLQALLKVYDCLQRFKEKKLVPDTTHAQILACEVLELLPKASGSPEIQELRQVLQAPHCKALLSAHDTVAQKDFEPLLPPLPDNIPDSEEAMRIVCLVKNQQPLGATIKRHEITGDILVARVIHGGLVERSGLLYAGDKLVEVNGVSVEGLDPEQVIHILAMSCGTIMFKVIPVSAPPVSSQKMVYVRAMIDYWPQEDPDIPCMDAGLPFLKGDILQIVDQNDALWWQARKISDLTICAGLIPSNHLLKRKQREFWWSQPYQPHTCLKSTRALSMEEEDSMKIDEKCVEADEETFESEELAEAKDEFVGDGQKFFIAGFRRSMRLCRRKSHFSQLHASLCCSCSCYSAVGAPYEEVVRYQRQPADKHRLIVLVGPSGVGVNELRRQLIGCNPSCFQSAVPHTTRFPKSYEMDGREYHYVSRETFESLMYGHKMLEYGEYKGHLYGTSVNAVHAVLDEGKICIMDLEPQDIQSARTRDLKPYVIFIKPPNTSSMRHSRKNAKITTDYYVDMKFKDEDLQEMEELAQKMESQFGQFFDHVIVNDNLQDACGQLLSAIQKAQEELQWVPEAWVSPDTES.

Over residues 1–16 (MRQSDRGAELTNEDRA) the composition is skewed to basic and acidic residues. The tract at residues 1 to 23 (MRQSDRGAELTNEDRALPTPPDP) is disordered. 2 L27 domains span residues 23–79 (PENG…EKKL) and 86–136 (AQIL…FEPL). The PDZ domain maps to 153 to 234 (IVCLVKNQQP…TIMFKVIPVS (82 aa)). The region spanning 241 to 311 (QKMVYVRAMI…PSNHLLKRKQ (71 aa)) is the SH3 domain. Positions 426-615 (HRLIVLVGPS…ACGQLLSAIQ (190 aa)) constitute a Guanylate kinase-like domain. The stretch at 567–622 (VDMKFKDEDLQEMEELAQKMESQFGQFFDHVIVNDNLQDACGQLLSAIQKAQEELQ) forms a coiled coil.

Belongs to the MAGUK family. May interact with GRIA2. Interacts with MPDZ. Forms a complex with CRB1 and PALS1. Interacts with FASLG. In terms of tissue distribution, detected in the retina (at protein level). Highly enriched in the retina where it is mainly expressed by rod photoreceptors; detected in the inner segment of the photoreceptor layer and in the outer nuclear layer. Also detected at much lower levels in pineal gland, cerebellum, cortex, hippocampus, olfactory bulb, heart, liver and spleen. Expressed in the CA1-CA3 regions of pyramidal cell layers and in the granule cell layer of dentate gyrus in the hippocampus. In the cerebellum, expressed in Purkinje cells and throughout the granule cell layer. In the olfactory bulb, expressed in mitral cells.

The protein localises to the cytoplasm. May play a role in retinal photoreceptors development. This Mus musculus (Mouse) protein is MAGUK p55 subfamily member 4 (Mpp4).